A 1236-amino-acid chain; its full sequence is ESX-4 secretion system protein EccC4 (1236 aa).

Transmembrane regions (helical) follow at residues 32 to 52 (LLPVVMSVATVGVMVTVFLPG) and 59 to 79 (PTFLAFPMMMLVSLVVTAVTG). 3 FtsK domains span residues 407 to 607 (GTAV…SESR), 747 to 936 (RVPL…ADSE), and 1018 to 1201 (GQPV…DEGA). ATP-binding positions include 430–437 (GATGSGKS), 765–772 (GAPQTGKS), and 1035–1042 (GDNECGKT).

In terms of assembly, part of the ESX-4 / type VII secretion system (T7SS), which is composed of cytosolic and membrane components.

The protein localises to the cell membrane. This is ESX-4 secretion system protein EccC4 (eccC4) from Mycobacterium tuberculosis (strain ATCC 25618 / H37Rv).